The following is a 1201-amino-acid chain: Protein dduB (1201 aa).

The N-terminal stretch at 1-22 (MKFIKYLLILFLILKINYFVES) is a signal peptide. The Extracellular portion of the chain corresponds to 23 to 1180 (GVDCQKNTEY…QDPSDELSTS (1158 aa)). Asn68, Asn122, Asn150, Asn185, Asn283, Asn348, Asn360, Asn437, Asn448, Asn518, Asn535, Asn554, Asn585, Asn631, Asn759, Asn815, Asn830, Asn844, Asn946, Asn1042, Asn1058, Asn1098, and Asn1108 each carry an N-linked (GlcNAc...) asparagine glycan. The helical transmembrane segment at 1181–1201 (SFIQLNILSLLLISIFTIFIL) threads the bilayer.

The protein localises to the membrane. This chain is Protein dduB (dduB), found in Dictyostelium discoideum (Social amoeba).